We begin with the raw amino-acid sequence, 395 residues long: 8-amino-7-oxononanoate synthase (395 aa).

Position 24 (lysine 24) interacts with substrate. 111–112 (GF) lines the pyridoxal 5'-phosphate pocket. Histidine 136 contacts substrate. Residues serine 184, 209 to 212 (DDAH), and 240 to 243 (TLSK) contribute to the pyridoxal 5'-phosphate site. The residue at position 243 (lysine 243) is an N6-(pyridoxal phosphate)lysine. Residue threonine 357 coordinates substrate.

This sequence belongs to the class-II pyridoxal-phosphate-dependent aminotransferase family. BioF subfamily. In terms of assembly, homodimer. Pyridoxal 5'-phosphate is required as a cofactor.

It catalyses the reaction 6-carboxyhexanoyl-[ACP] + L-alanine + H(+) = (8S)-8-amino-7-oxononanoate + holo-[ACP] + CO2. It functions in the pathway cofactor biosynthesis; biotin biosynthesis. Functionally, catalyzes the decarboxylative condensation of pimeloyl-[acyl-carrier protein] and L-alanine to produce 8-amino-7-oxononanoate (AON), [acyl-carrier protein], and carbon dioxide. This is 8-amino-7-oxononanoate synthase from Treponema denticola (strain ATCC 35405 / DSM 14222 / CIP 103919 / JCM 8153 / KCTC 15104).